A 532-amino-acid chain; its full sequence is Glucose-6-phosphate isomerase (532 aa).

The active-site Proton donor is the Glu-322. Active-site residues include His-351 and Lys-457.

The protein belongs to the GPI family.

The protein resides in the cytoplasm. The enzyme catalyses alpha-D-glucose 6-phosphate = beta-D-fructose 6-phosphate. It functions in the pathway carbohydrate biosynthesis; gluconeogenesis. Its pathway is carbohydrate degradation; glycolysis; D-glyceraldehyde 3-phosphate and glycerone phosphate from D-glucose: step 2/4. Catalyzes the reversible isomerization of glucose-6-phosphate to fructose-6-phosphate. This is Glucose-6-phosphate isomerase from Synechococcus sp. (strain JA-3-3Ab) (Cyanobacteria bacterium Yellowstone A-Prime).